Consider the following 343-residue polypeptide: Transmembrane protein 120A (343 aa).

The Cytoplasmic portion of the chain corresponds to Met1–Glu132. Lys130 is a CoA binding site. The chain crosses the membrane as a helical span at residues Tyr133–Arg152. Residues Phe153–Arg158 lie on the Extracellular side of the membrane. A helical transmembrane segment spans residues Val159–Ile177. Residues Arg178–Lys190 lie on the Cytoplasmic side of the membrane. Residues Ser187 and Arg188 each coordinate CoA. The helical transmembrane segment at Gly191–Thr209 threads the bilayer. Residues Trp210–Lys218 are Extracellular-facing. The chain crosses the membrane as a helical span at residues Phe219–Tyr240. Residues Gln237, Tyr240, Gln241, and His283 each contribute to the CoA site. Over Gln241 to Arg270 the chain is Cytoplasmic. A helical membrane pass occupies residues Gly271–Phe294. Over Asn295–Glu304 the chain is Extracellular. The chain crosses the membrane as a helical span at residues Trp305–His330. Over Gln331 to Asp343 the chain is Cytoplasmic. Lys332 is a CoA binding site.

This sequence belongs to the TMEM120 family. In terms of assembly, homodimer. Forms heterooligomer with TMEM120B. Interacts with PKD2; TMEM120A inhibits PKD2 channel activity through the physical association of PKD2 with TMEM120A.

The protein localises to the cell membrane. It is found in the nucleus inner membrane. It localises to the endoplasmic reticulum. Its function is as follows. Multifunctional protein involved in mechanosensation, and plays an essential role in lipid metabolism and adipocyte differentiation. May function as a potential ion channel involved in sensing mechanical stimuli. Mediates the mechanosensitivity of the PKD2-TMEM120A channel complex through direct physical interaction. TMEM120A seems to affect mechanosensation by inhibiting PIEZO2 channels, possibly by altering cellular lipid content. TMEM120A is structurally similar to a lipid-modifying enzyme, ELOVL7, and contains a bound coenzyme A molecule, which suggests it might function as an enzyme in lipid metabolism. Additionnaly, implicated in innate immune response against Zika virus. Acts as a key activator of the antiviral signaling involving STING1. This chain is Transmembrane protein 120A, found in Rattus norvegicus (Rat).